Reading from the N-terminus, the 271-residue chain is Colicin-M (271 aa).

The TonB box motif lies at 2–9; it reads ETLTVHAP.

In terms of biological role, colicins are polypeptide toxins produced by and active against E.coli and closely related bacteria. This is a calcium-requiring inhibitor for murein biosynthesis; it causes lysis of sensitive cells accompanied by murein degradation. The target site is possibly the cytoplasmic membrane. This Escherichia coli protein is Colicin-M (cma).